We begin with the raw amino-acid sequence, 475 residues long: Glutamyl-tRNA(Gln) amidotransferase subunit A (475 aa).

Active-site charge relay system residues include Lys69 and Ser144. Catalysis depends on Ser168, which acts as the Acyl-ester intermediate.

The protein belongs to the amidase family. GatA subfamily. As to quaternary structure, heterotrimer of A, B and C subunits.

The catalysed reaction is L-glutamyl-tRNA(Gln) + L-glutamine + ATP + H2O = L-glutaminyl-tRNA(Gln) + L-glutamate + ADP + phosphate + H(+). Functionally, allows the formation of correctly charged Gln-tRNA(Gln) through the transamidation of misacylated Glu-tRNA(Gln) in organisms which lack glutaminyl-tRNA synthetase. The reaction takes place in the presence of glutamine and ATP through an activated gamma-phospho-Glu-tRNA(Gln). The protein is Glutamyl-tRNA(Gln) amidotransferase subunit A of Methanococcoides burtonii (strain DSM 6242 / NBRC 107633 / OCM 468 / ACE-M).